A 448-amino-acid polypeptide reads, in one-letter code: MANVVENLGKLERRVTISLPKDTVQKEIDARIQKLAKTVRIPGFRPGKVPLKMVAQQYAGQVEAEVLSDKIGQEFFTVSRAENLRVAGQPSFEPKQEQAEDAYAFDATFEVYPEVKIGDLATAEVERSTTSIGDAEIDRTLDILRKQRVHYHARGEAGEHGDGGEDTAAKNGDRVTVDFVGKIDDVAFQGGTAEDFPFVLGEGRMLPEFETAALGLKVGEQRTFDLKFPDDYHGKDVAGKTAQFTVTMKKIEWPHLPEIDAEFAKSLGIEDGDLTKMRAEIKENLEREAKRRTQSIVKNQVMDALLKISELDVPKALIEQDQQRLVEMARQDLAQRGVPNAKDAPIPAEMFAEQAERRVKLGLVLAELVKANGLEAKPEQIRAEVDEFAKSYEDPKEVVRWYYSNQQRLAEMEAFVVESNVVDFVLGKAKVTDKEVSFEALASASAQA.

The region spanning 172 to 257 (GDRVTVDFVG…MKKIEWPHLP (86 aa)) is the PPIase FKBP-type domain.

This sequence belongs to the FKBP-type PPIase family. Tig subfamily.

It localises to the cytoplasm. The enzyme catalyses [protein]-peptidylproline (omega=180) = [protein]-peptidylproline (omega=0). Functionally, involved in protein export. Acts as a chaperone by maintaining the newly synthesized protein in an open conformation. Functions as a peptidyl-prolyl cis-trans isomerase. The chain is Trigger factor from Burkholderia orbicola (strain MC0-3).